The sequence spans 104 residues: Gastrin (104 aa).

An N-terminal signal peptide occupies residues 1–21; it reads MQRLCVCVLILALALTAFSEA. The interval 22-49 is disordered; sequence SWKPRSQLQDAPSGPGANGGLEPHWLNR. Positions 22–58 are excised as a propeptide; it reads SWKPRSQLQDAPSGPGANGGLEPHWLNRLGPASHHRW. Pyrrolidone carboxylic acid is present on residues glutamine 59 and glutamine 76. At tyrosine 87 the chain carries Sulfotyrosine. Phenylalanine 92 bears the Phenylalanine amide mark. Serine 96 is subject to Phosphoserine. The propeptide occupies 96-104; sequence SAEDGDQHP.

It belongs to the gastrin/cholecystokinin family.

Its subcellular location is the secreted. In terms of biological role, gastrin stimulates the stomach mucosa to produce and secrete hydrochloric acid and the pancreas to secrete its digestive enzymes. It also stimulates smooth muscle contraction and increases blood circulation and water secretion in the stomach and intestine. This chain is Gastrin (GAST), found in Felis catus (Cat).